A 1201-amino-acid chain; its full sequence is HEAT repeat-containing protein 6 (1201 aa).

Residues 1-25 (MAGKVTFLGSNSSFSPDGKTQGFKS) are disordered. An HEAT 1 repeat occupies 182-221 (PDLLGPSGVLVKYGDPKQPDIELRRSAVHCIANLCLSVPS). The tract at residues 321–390 (AVKPEPAQDT…SQSSMLTSPS (70 aa)) is disordered. The segment covering 341 to 352 (QKKRKSRGKGKK) has biased composition (basic residues). Positions 375-390 (SGWSHGSQSSMLTSPS) are enriched in polar residues. 3 HEAT repeats span residues 460-498 (GIGG…GSRQ), 523-560 (SIRE…NVPY), and 566-603 (GLLS…TQAP). Residues 618 to 633 (SSLGSGISTPQESPLS) are compositionally biased toward polar residues. The segment at 618–653 (SSLGSGISTPQESPLSWRQPARRDEEASSPAAAEGP) is disordered.

The polypeptide is HEAT repeat-containing protein 6 (heatr6) (Danio rerio (Zebrafish)).